We begin with the raw amino-acid sequence, 59 residues long: Photosystem II reaction center protein K (59 aa).

Residues 1-22 (MLNIFSLICLNSALHSSSFFFA) constitute a propeptide that is removed on maturation. The helical transmembrane segment at 38 to 58 (MPVIPVLFFLLALVWQAAVSF) threads the bilayer.

The protein belongs to the PsbK family. In terms of assembly, PSII is composed of 1 copy each of membrane proteins PsbA, PsbB, PsbC, PsbD, PsbE, PsbF, PsbH, PsbI, PsbJ, PsbK, PsbL, PsbM, PsbT, PsbX, PsbY, PsbZ, Psb30/Ycf12, at least 3 peripheral proteins of the oxygen-evolving complex and a large number of cofactors. It forms dimeric complexes.

It localises to the plastid. It is found in the chloroplast thylakoid membrane. In terms of biological role, one of the components of the core complex of photosystem II (PSII). PSII is a light-driven water:plastoquinone oxidoreductase that uses light energy to abstract electrons from H(2)O, generating O(2) and a proton gradient subsequently used for ATP formation. It consists of a core antenna complex that captures photons, and an electron transfer chain that converts photonic excitation into a charge separation. In Calycanthus floridus var. glaucus (Eastern sweetshrub), this protein is Photosystem II reaction center protein K.